We begin with the raw amino-acid sequence, 181 residues long: Inner membrane-spanning protein YciB (181 aa).

5 helical membrane passes run 3 to 23 (LLFD…FGIY), 54 to 74 (SLAI…PWFI), 81 to 101 (IYWL…KPLI), 119 to 139 (LNLA…YVAY), and 149 to 169 (FKLF…AFYL).

This sequence belongs to the YciB family.

The protein localises to the cell inner membrane. Functionally, plays a role in cell envelope biogenesis, maintenance of cell envelope integrity and membrane homeostasis. This Legionella pneumophila (strain Corby) protein is Inner membrane-spanning protein YciB.